A 264-amino-acid chain; its full sequence is uncharacterized protein (264 aa).

A divalent metal cation is bound by residues His-7, His-9, Glu-102, His-138, His-163, and Asp-213.

This sequence belongs to the metallo-dependent hydrolases superfamily. TatD-type hydrolase family. A divalent metal cation serves as cofactor.

This is an uncharacterized protein from Buchnera aphidicola subsp. Acyrthosiphon pisum (strain APS) (Acyrthosiphon pisum symbiotic bacterium).